Reading from the N-terminus, the 407-residue chain is MLRIGLTGGIGAGKSALSSAFAQCGAVIVDGDVIAREVVRPGTEGLAALVEAFGRDILLADGSLDRPALAAKAFADDAARQTLNGIVHPLVGARRAEIIASVPADSVVVEDIPLLVESGMAPLFPLVVIVYADVEVRLRRLVEQRGMAEADARARIAAQASDEQRRAVADIWLDNSGSPAELVQRAQQVWNERIVPFAHNLSTRQIARAPVRLVPPDPEWPAQAQRIVNRLKTASGHRALRVDHVGSTALPGDPDFAAKDVIDIQITVESLAAADELVEPLLAAGYPRLEHITADVAKPDARSTVERYDHTGDPALWHKRIHASADPGRPTNVHIRVDGWPGQQFALLFVDWLTADPDARADYLAVKRSAEQRADGDIDAYVAVKEPWFRDAYRRAWDWADSTGWKP.

In terms of domain architecture, DPCK spans 3–201 (RIGLTGGIGA…ERIVPFAHNL (199 aa)). An ATP-binding site is contributed by 11–16 (GAGKSA). Positions 196–407 (PFAHNLSTRQ…DWADSTGWKP (212 aa)) are UPF0157.

The protein in the N-terminal section; belongs to the CoaE family. In the C-terminal section; belongs to the UPF0157 (GrpB) family.

It localises to the cytoplasm. The catalysed reaction is 3'-dephospho-CoA + ATP = ADP + CoA + H(+). The protein operates within cofactor biosynthesis; coenzyme A biosynthesis; CoA from (R)-pantothenate: step 5/5. In terms of biological role, catalyzes the phosphorylation of the 3'-hydroxyl group of dephosphocoenzyme A to form coenzyme A. This chain is Dephospho-CoA kinase, found in Mycolicibacterium paratuberculosis (strain ATCC BAA-968 / K-10) (Mycobacterium paratuberculosis).